The chain runs to 1052 residues: Membrane-bound transcription factor site-1 protease (1052 aa).

Residues 1–17 (MKLINIWLLLLVVLLCG) form the signal peptide. Positions 18-186 (KKHLGDRLGK…TGRHSSRRLL (169 aa)) are excised as a propeptide. Residue Asn148 is glycosylated (N-linked (GlcNAc...) asparagine). Ser168 carries the post-translational modification Phosphoserine. The Lumenal segment spans residues 187–999 (RAIPRQVAQT…MPGRYNQEVG (813 aa)). Residues 190 to 472 (PRQVAQTLQA…HGKLDLLRAY (283 aa)) form the Peptidase S8 domain. Asp218 (charge relay system) is an active-site residue. A glycan (N-linked (GlcNAc...) asparagine) is linked at Asn236. His249 functions as the Charge relay system in the catalytic mechanism. Asn305 carries N-linked (GlcNAc...) asparagine glycosylation. Ser414 (charge relay system) is an active-site residue. 2 N-linked (GlcNAc...) asparagine glycosylation sites follow: Asn515 and Asn728. Polar residues predominate over residues 877–887 (PSLSHSGNRQR). Positions 877–900 (PSLSHSGNRQRPPSGAGLAPPERM) are disordered. N-linked (GlcNAc...) asparagine glycosylation occurs at Asn939. The helical transmembrane segment at 1000-1022 (QTIPVFAFLGAMVALAFFVVQIS) threads the bilayer. The Cytoplasmic segment spans residues 1023 to 1052 (KAKSRPKRRRPRAKRPQLTQQTHPPRTPSV). Basic residues predominate over residues 1025–1037 (KSRPKRRRPRAKR). Residues 1025-1052 (KSRPKRRRPRAKRPQLTQQTHPPRTPSV) are disordered.

It belongs to the peptidase S8 family. Requires Ca(2+) as cofactor. In terms of processing, the 148 kDa zymogen is processed progressively into two membrane-bound 120 and 106 kDa forms in the endoplasmic reticulum, and late into a secreted 98 kDa form. The propeptide is autocatalytically removed through an intramolecular cleavage after Leu-186. Further cleavage generates 14, 10, and 8 kDa intermediates.

The protein localises to the endoplasmic reticulum membrane. It is found in the golgi apparatus membrane. It carries out the reaction Processes precursors containing basic and hydrophobic/aliphatic residues at P4 and P2, respectively, with a relatively relaxed acceptance of amino acids at P1 and P3.. Its activity is regulated as follows. Inhibited by divalent copper and zinc ions, but not by nickel or cobalt. Inhibited by its prosegment, but not smaller fragments. Inhibited by 4-(2-aminoethyl)benzenesulfonyl fluoride (AEBSF), a serine protease inhibitor. Serine protease that cleaves after hydrophobic or small residues, provided that Arg or Lys is in position P4: known substrates include SREBF1/SREBP1, SREBF2/SREBP2, BDNF, GNPTAB, ATF6, ATF6B and FAM20C. Cleaves substrates after Arg-Ser-Val-Leu (SREBP2), Arg-His-Leu-Leu (ATF6), Arg-Gly-Leu-Thr (BDNF) and its own propeptide after Arg-Arg-Leu-Leu. Catalyzes the first step in the proteolytic activation of the sterol regulatory element-binding proteins (SREBPs) SREBF1/SREBP1 and SREBF2/SREBP2. Also mediates the first step in the proteolytic activation of the cyclic AMP-dependent transcription factor ATF-6 (ATF6 and ATF6B). Mediates the protein cleavage of GNPTAB into subunit alpha and beta, thereby participating in biogenesis of lysosomes. Cleaves the propeptide from FAM20C which is required for FAM20C secretion from the Golgi apparatus membrane and for enhancement of FAM20C kinase activity, promoting osteoblast differentiation and biomineralization. Involved in the regulation of M6P-dependent Golgi-to-lysosome trafficking of lysosomal enzymes. It is required for the activation of CREB3L2/BBF2H7, a transcriptional activator of MIA3/TANGO and other genes controlling mega vesicle formation. Therefore, it plays a key role in the regulation of mega vesicle-mediated collagen trafficking. In astrocytes and osteoblasts, upon DNA damage and ER stress, mediates the first step of the regulated intramembrane proteolytic activation of the transcription factor CREB3L1, leading to the inhibition of cell-cycle progression. The chain is Membrane-bound transcription factor site-1 protease from Cricetulus griseus (Chinese hamster).